Consider the following 156-residue polypeptide: Transcription elongation factor GreA (156 aa).

The stretch at 46–66 (AEYHSAREKQSFIEGRIKELE) forms a coiled coil.

The protein belongs to the GreA/GreB family.

In terms of biological role, necessary for efficient RNA polymerase transcription elongation past template-encoded arresting sites. The arresting sites in DNA have the property of trapping a certain fraction of elongating RNA polymerases that pass through, resulting in locked ternary complexes. Cleavage of the nascent transcript by cleavage factors such as GreA or GreB allows the resumption of elongation from the new 3'terminus. GreA releases sequences of 2 to 3 nucleotides. This is Transcription elongation factor GreA from Ruegeria pomeroyi (strain ATCC 700808 / DSM 15171 / DSS-3) (Silicibacter pomeroyi).